The following is a 72-amino-acid chain: Translation initiation factor IF-1 (72 aa).

An S1-like domain is found at 1–72 (MAKEDVIEMQ…SKGRIVFRAR (72 aa)).

The protein belongs to the IF-1 family. As to quaternary structure, component of the 30S ribosomal translation pre-initiation complex which assembles on the 30S ribosome in the order IF-2 and IF-3, IF-1 and N-formylmethionyl-tRNA(fMet); mRNA recruitment can occur at any time during PIC assembly.

Its subcellular location is the cytoplasm. One of the essential components for the initiation of protein synthesis. Stabilizes the binding of IF-2 and IF-3 on the 30S subunit to which N-formylmethionyl-tRNA(fMet) subsequently binds. Helps modulate mRNA selection, yielding the 30S pre-initiation complex (PIC). Upon addition of the 50S ribosomal subunit IF-1, IF-2 and IF-3 are released leaving the mature 70S translation initiation complex. This chain is Translation initiation factor IF-1, found in Pseudoalteromonas translucida (strain TAC 125).